A 221-amino-acid chain; its full sequence is Large ribosomal subunit protein uL1 (221 aa).

The protein belongs to the universal ribosomal protein uL1 family. In terms of assembly, part of the 50S ribosomal subunit.

In terms of biological role, probably involved in E site tRNA release. Binds directly to 23S rRNA. Protein L1 is also a translational repressor protein, it controls the translation of its operon by binding to its mRNA. This Sulfolobus acidocaldarius (strain ATCC 33909 / DSM 639 / JCM 8929 / NBRC 15157 / NCIMB 11770) protein is Large ribosomal subunit protein uL1.